The following is a 149-amino-acid chain: MNVFLSKYINGVDKKSRVTVPANYRAVLGKELFNGVIAYPSIRNNCIEVCGIAHIEKLRKMIETLDPYSEERDAFETMIFGEAVQLAFDGEGRIILPQSLMKHADIEEQACFVGKGIIFEIWQPQNFEKYLSYAQNIAHEKRLTLRNVH.

2 SpoVT-AbrB domains span residues 7–54 (KYIN…GIAH) and 83–126 (AVQL…QPQN).

It belongs to the MraZ family. Forms oligomers.

The protein resides in the cytoplasm. It localises to the nucleoid. The protein is Transcriptional regulator MraZ of Rickettsia typhi (strain ATCC VR-144 / Wilmington).